The chain runs to 221 residues: Tetraspanin-2 (221 aa).

Topologically, residues 1 to 13 are cytoplasmic; that stretch reads MGRFRGGLRCIKY. Residues 14-34 form a helical membrane-spanning segment; that stretch reads LLLGFNLLFWLAGSAVIAFGL. Residues 35 to 54 lie on the Extracellular side of the membrane; the sequence is WFRFGGAIKELSSEDKSPEY. The chain crosses the membrane as a helical span at residues 55-75; it reads FYVGLYVLVGAGALMMAVGFF. Over 76–90 the chain is Cytoplasmic; the sequence is GCCGAMRESQCVLGS. Residues 91 to 111 traverse the membrane as a helical segment; the sequence is FFTCLLVIFAAEVTTGVFAFI. Topologically, residues 112–188 are extracellular; it reads GKGVAIRHVQ…ETIISVKLQL (77 aa). N-linked (GlcNAc...) asparagine glycosylation is present at asparagine 139. The helical transmembrane segment at 189-209 threads the bilayer; sequence IGIVGIGIAGLTIFGMIFSMV. At 210–221 the chain is on the cytoplasmic side; sequence LCCAIRNSRDVI.

It belongs to the tetraspanin (TM4SF) family.

The protein localises to the membrane. May play a role in signalling in oligodendrocytes in the early stages of their terminal differentiation into myelin-forming glia and may also function in stabilizing the mature sheath. The polypeptide is Tetraspanin-2 (TSPAN2) (Homo sapiens (Human)).